Consider the following 466-residue polypeptide: ATP synthase subunit beta (466 aa).

Residue 155-162 (GGAGVGKT) coordinates ATP.

The protein belongs to the ATPase alpha/beta chains family. In terms of assembly, F-type ATPases have 2 components, CF(1) - the catalytic core - and CF(0) - the membrane proton channel. CF(1) has five subunits: alpha(3), beta(3), gamma(1), delta(1), epsilon(1). CF(0) has three main subunits: a(1), b(2) and c(9-12). The alpha and beta chains form an alternating ring which encloses part of the gamma chain. CF(1) is attached to CF(0) by a central stalk formed by the gamma and epsilon chains, while a peripheral stalk is formed by the delta and b chains.

Its subcellular location is the cell inner membrane. It catalyses the reaction ATP + H2O + 4 H(+)(in) = ADP + phosphate + 5 H(+)(out). Produces ATP from ADP in the presence of a proton gradient across the membrane. The catalytic sites are hosted primarily by the beta subunits. The protein is ATP synthase subunit beta of Aromatoleum aromaticum (strain DSM 19018 / LMG 30748 / EbN1) (Azoarcus sp. (strain EbN1)).